Consider the following 202-residue polypeptide: Prohormone-4 (202 aa).

The N-terminal stretch at 1–28 (MVQRLCTSVAALSLALSACVFFPRAVMA) is a signal peptide. The LDL-receptor class A domain maps to 46 to 86 (ACRPYEPFKCPGDDTCISIQYLCDGAPDCQDGYDEDSRLCT). Disulfide bonds link C47-C61, C55-C74, and C68-C85.

It is found in the secreted. In Apis mellifera (Honeybee), this protein is Prohormone-4.